The primary structure comprises 626 residues: Serine/threonine-protein kinase PknB (626 aa).

Over 1-332 (MTTPSHLSDR…DRSIGSVGRW (332 aa)) the chain is Cytoplasmic. The Protein kinase domain maps to 11–274 (YELGEILGFG…TAAEMRADLV (264 aa)). ATP-binding positions include 17–25 (LGFGGMSEV), Lys40, and 93–95 (EYV). Asp138 (proton acceptor) is an active-site residue. Residues 140–143 (KPAN) and Asp156 contribute to the ATP site. Mg(2+) is bound by residues Asn143 and Asp156. A phosphoserine; by autocatalysis mark is found at Ser166 and Ser169. A phosphothreonine; by autocatalysis mark is found at Thr171, Thr173, and Thr294. Phosphoserine; by autocatalysis is present on Ser295. Positions 299–323 (SAAGNLSGPRTDPLPRQDLDDTDRD) are disordered. Thr309 bears the Phosphothreonine; by autocatalysis mark. Basic and acidic residues predominate over residues 311 to 323 (PLPRQDLDDTDRD). The chain crosses the membrane as a helical span at residues 333–353 (VAVVAVLAVLTVVVTIAINTF). Over 354-626 (GGITRDVQVP…DGIITLRFGQ (273 aa)) the chain is Extracellular. 4 consecutive PASTA domains span residues 356 to 422 (ITRD…NVST), 423 to 490 (GPEQ…IVGS), 491 to 557 (GPAT…QVSK), and 558 to 626 (GNQF…RFGQ).

The protein belongs to the protein kinase superfamily. Ser/Thr protein kinase family. In terms of assembly, homodimer. Autophosphorylated. Dephosphorylated by PstP.

It is found in the cell membrane. The enzyme catalyses L-seryl-[protein] + ATP = O-phospho-L-seryl-[protein] + ADP + H(+). The catalysed reaction is L-threonyl-[protein] + ATP = O-phospho-L-threonyl-[protein] + ADP + H(+). In terms of biological role, protein kinase that regulates many aspects of mycobacterial physiology. Is a key component of a signal transduction pathway that regulates cell growth, cell shape and cell division via phosphorylation of target proteins. This Mycobacterium bovis (strain ATCC BAA-935 / AF2122/97) protein is Serine/threonine-protein kinase PknB (pknB).